The sequence spans 157 residues: Transcription elongation factor GreA (157 aa).

The stretch at Leu-14–Glu-37 forms a coiled coil.

It belongs to the GreA/GreB family.

In terms of biological role, necessary for efficient RNA polymerase transcription elongation past template-encoded arresting sites. The arresting sites in DNA have the property of trapping a certain fraction of elongating RNA polymerases that pass through, resulting in locked ternary complexes. Cleavage of the nascent transcript by cleavage factors such as GreA or GreB allows the resumption of elongation from the new 3'terminus. GreA releases sequences of 2 to 3 nucleotides. The chain is Transcription elongation factor GreA from Vibrio cholerae serotype O1 (strain ATCC 39315 / El Tor Inaba N16961).